The following is a 366-amino-acid chain: Dihydroorotate dehydrogenase (quinone) (366 aa).

Residues 74 to 78 (AGFDK) and Thr-98 each bind FMN. Lys-78 contributes to the substrate binding site. Residue 123-127 (NRMGF) coordinates substrate. Asn-156 and Asn-189 together coordinate FMN. Residue Asn-189 participates in substrate binding. Ser-192 (nucleophile) is an active-site residue. Asn-194 contacts substrate. The FMN site is built by Lys-231 and Thr-259. Residue 260–261 (NT) coordinates substrate. FMN contacts are provided by residues Gly-285, Gly-314, and 335 to 336 (YT).

It belongs to the dihydroorotate dehydrogenase family. Type 2 subfamily. In terms of assembly, monomer. The cofactor is FMN.

The protein resides in the cell membrane. It carries out the reaction (S)-dihydroorotate + a quinone = orotate + a quinol. The protein operates within pyrimidine metabolism; UMP biosynthesis via de novo pathway; orotate from (S)-dihydroorotate (quinone route): step 1/1. Functionally, catalyzes the conversion of dihydroorotate to orotate with quinone as electron acceptor. The chain is Dihydroorotate dehydrogenase (quinone) from Kineococcus radiotolerans (strain ATCC BAA-149 / DSM 14245 / SRS30216).